Reading from the N-terminus, the 459-residue chain is Bifunctional protein GlmU (459 aa).

A pyrophosphorylase region spans residues 1 to 229 (MTNYAIILAA…FDESLGVNDR (229 aa)). UDP-N-acetyl-alpha-D-glucosamine contacts are provided by residues 8-11 (LAAG), Lys22, Gln72, and 77-78 (GT). Asp102 lines the Mg(2+) pocket. 4 residues coordinate UDP-N-acetyl-alpha-D-glucosamine: Gly139, Glu154, Asn169, and Asn227. A Mg(2+)-binding site is contributed by Asn227. The tract at residues 230-250 (VALATAESVMRRRINQKHMVN) is linker. Residues 251 to 459 (GVSFVNPDAT…KRLPHHPQNK (209 aa)) form an N-acetyltransferase region. Residues Arg332 and Lys350 each contribute to the UDP-N-acetyl-alpha-D-glucosamine site. His362 functions as the Proton acceptor in the catalytic mechanism. Tyr365 and Asn376 together coordinate UDP-N-acetyl-alpha-D-glucosamine. Acetyl-CoA contacts are provided by residues Ala379, 385–386 (NY), Ser404, Ala422, and Arg439.

It in the N-terminal section; belongs to the N-acetylglucosamine-1-phosphate uridyltransferase family. This sequence in the C-terminal section; belongs to the transferase hexapeptide repeat family. As to quaternary structure, homotrimer. The cofactor is Mg(2+).

The protein resides in the cytoplasm. It carries out the reaction alpha-D-glucosamine 1-phosphate + acetyl-CoA = N-acetyl-alpha-D-glucosamine 1-phosphate + CoA + H(+). The catalysed reaction is N-acetyl-alpha-D-glucosamine 1-phosphate + UTP + H(+) = UDP-N-acetyl-alpha-D-glucosamine + diphosphate. Its pathway is nucleotide-sugar biosynthesis; UDP-N-acetyl-alpha-D-glucosamine biosynthesis; N-acetyl-alpha-D-glucosamine 1-phosphate from alpha-D-glucosamine 6-phosphate (route II): step 2/2. It participates in nucleotide-sugar biosynthesis; UDP-N-acetyl-alpha-D-glucosamine biosynthesis; UDP-N-acetyl-alpha-D-glucosamine from N-acetyl-alpha-D-glucosamine 1-phosphate: step 1/1. It functions in the pathway bacterial outer membrane biogenesis; LPS lipid A biosynthesis. Its function is as follows. Catalyzes the last two sequential reactions in the de novo biosynthetic pathway for UDP-N-acetylglucosamine (UDP-GlcNAc). The C-terminal domain catalyzes the transfer of acetyl group from acetyl coenzyme A to glucosamine-1-phosphate (GlcN-1-P) to produce N-acetylglucosamine-1-phosphate (GlcNAc-1-P), which is converted into UDP-GlcNAc by the transfer of uridine 5-monophosphate (from uridine 5-triphosphate), a reaction catalyzed by the N-terminal domain. This Streptococcus gordonii (strain Challis / ATCC 35105 / BCRC 15272 / CH1 / DL1 / V288) protein is Bifunctional protein GlmU.